Reading from the N-terminus, the 432-residue chain is Enolase (432 aa).

(2R)-2-phosphoglycerate is bound at residue glutamine 163. Glutamate 205 (proton donor) is an active-site residue. The Mg(2+) site is built by aspartate 242, glutamate 285, and aspartate 312. Positions 337, 366, 367, and 388 each coordinate (2R)-2-phosphoglycerate. The Proton acceptor role is filled by lysine 337.

It belongs to the enolase family. It depends on Mg(2+) as a cofactor.

The protein localises to the cytoplasm. The protein resides in the secreted. It is found in the cell surface. The enzyme catalyses (2R)-2-phosphoglycerate = phosphoenolpyruvate + H2O. Its pathway is carbohydrate degradation; glycolysis; pyruvate from D-glyceraldehyde 3-phosphate: step 4/5. In terms of biological role, catalyzes the reversible conversion of 2-phosphoglycerate (2-PG) into phosphoenolpyruvate (PEP). It is essential for the degradation of carbohydrates via glycolysis. This is Enolase from Bifidobacterium adolescentis (strain ATCC 15703 / DSM 20083 / NCTC 11814 / E194a).